We begin with the raw amino-acid sequence, 220 residues long: Ktr system potassium uptake protein A (220 aa).

Residues 5–121 (DKQFAVIGLG…LQKIGADHII (117 aa)) enclose the RCK N-terminal domain. ATP contacts are provided by residues arginine 15, 35 to 37 (DIN), 55 to 56 (NC), 77 to 79 (IGA), 102 to 104 (KAN), and glutamate 124. The RCK C-terminal domain maps to 138–220 (KRVLEFHPLG…DKLANKLKSL (83 aa)).

It belongs to the KtrA potassium transport family. The uptake system is composed of KtrA and KtrB.

Its subcellular location is the cell inner membrane. With respect to regulation, requires both ATP and a high membrane potential for activity. Binding of ATP causes a conformational change in KtrA, which promotes formation of the KtrAB complex. Can also bind, with lower affinity, other nucleotides such as NADH or NAD(+), but only ATP can induce a conformational change. In terms of biological role, part of the Na(+)-dependent high affinity K(+) uptake system KtrAB. KtrA is the regulatory subunit and plays an important role in the substrate specificity and transport mechanism of the system. Binds ATP but lacks ATPase activity. The sequence is that of Ktr system potassium uptake protein A (ktrA) from Vibrio alginolyticus.